Reading from the N-terminus, the 119-residue chain is Flagellar transcriptional regulator FlhD (119 aa).

This sequence belongs to the FlhD family. Homodimer; disulfide-linked. Forms a heterohexamer composed of two FlhC and four FlhD subunits. Each FlhC binds a FlhD dimer, forming a heterotrimer, and a hexamer assembles by dimerization of two heterotrimers.

It is found in the cytoplasm. In terms of biological role, functions in complex with FlhC as a master transcriptional regulator that regulates transcription of several flagellar and non-flagellar operons by binding to their promoter region. Activates expression of class 2 flagellar genes, including fliA, which is a flagellum-specific sigma factor that turns on the class 3 genes. Also regulates genes whose products function in a variety of physiological pathways. The chain is Flagellar transcriptional regulator FlhD from Cronobacter sakazakii (strain ATCC BAA-894) (Enterobacter sakazakii).